The chain runs to 206 residues: Small ribosomal subunit protein uS4 (206 aa).

An S4 RNA-binding domain is found at 96–156 (GRLDNVVYRM…EKSKKQARIK (61 aa)).

Belongs to the universal ribosomal protein uS4 family. Part of the 30S ribosomal subunit. Contacts protein S5. The interaction surface between S4 and S5 is involved in control of translational fidelity.

Its function is as follows. One of the primary rRNA binding proteins, it binds directly to 16S rRNA where it nucleates assembly of the body of the 30S subunit. Functionally, with S5 and S12 plays an important role in translational accuracy. In Glaesserella parasuis serovar 5 (strain SH0165) (Haemophilus parasuis), this protein is Small ribosomal subunit protein uS4.